Consider the following 373-residue polypeptide: Beta sliding clamp homolog GriR (373 aa).

The protein belongs to the beta sliding clamp family. Forms a ring-shaped head-to-tail homodimer around DNA which binds and tethers DNA polymerases and other proteins to the DNA. The DNA replisome complex has a single clamp-loading complex (3 tau and 1 each of delta, delta', psi and chi subunits) which binds 3 Pol III cores (1 core on the leading strand and 2 on the lagging strand) each with a beta sliding clamp dimer. Additional proteins in the replisome are other copies of gamma, psi and chi, Ssb, DNA helicase and RNA primase.

It is found in the cytoplasm. Its function is as follows. A homolog of the beta sliding clamp protein encoded within the biosynthetic cluster for griselimycin synthesis. Upon expression in S.coelicolor A3(2), which is susceptible to this antibiotic, confers resistance to griselimycin. The beta sliding clamp confers DNA tethering and processivity to DNA polymerases and other proteins. Acts as a clamp, forming a ring around DNA (a reaction catalyzed by the clamp-loading complex) which diffuses in an ATP-independent manner freely and bidirectionally along dsDNA. Initially characterized for its ability to contact the catalytic subunit of DNA polymerase III (Pol III), a complex, multichain enzyme responsible for most of the replicative synthesis in bacteria; Pol III exhibits 3'-5' exonuclease proofreading activity. The beta chain is required for initiation of replication as well as for processivity of DNA replication. This is Beta sliding clamp homolog GriR from Streptomyces muensis.